Consider the following 546-residue polypeptide: Cysteine desulfurase SufS (546 aa).

The N-terminal stretch at 1–22 (MLRGPRCLYIYLFFVFLPFSFC) is a signal peptide. Residue K291 is modified to N6-(pyridoxal phosphate)lysine. The active-site Cysteine persulfide intermediate is the C497.

It belongs to the class-V pyridoxal-phosphate-dependent aminotransferase family. Csd subfamily. Monomer. Interacts with SufE; interaction enhances cysteine desulfurase activity of SufS. Pyridoxal 5'-phosphate is required as a cofactor. Post-translationally, proteolytically cleaved.

Its subcellular location is the plastid. The protein localises to the apicoplast. It catalyses the reaction (sulfur carrier)-H + L-cysteine = (sulfur carrier)-SH + L-alanine. It functions in the pathway cofactor biosynthesis; iron-sulfur cluster biosynthesis. Functionally, catalyzes sulfur activation and mobilization in sulfur mobilization (SUF) pathway for iron-sulfur (Fe-S) cluster biogenesis. Active when in complex with a partner protein SufE. Required for apicoplast maintenance. Plays a role in the development of sporozoites in oocysts in mosquitoes. May provide sulfur for MNMA-mediated tRNA modifications. The chain is Cysteine desulfurase SufS from Plasmodium falciparum (isolate 3D7).